The following is an 877-amino-acid chain: Oligopeptide transporter 2 (877 aa).

The Cytoplasmic segment spans residues 1 to 167 (MSETVKDKVI…DPTIPVETFR (167 aa)). Residues 168–188 (AYFLAIIWSVIGSGFNEFFSH) form a helical membrane-spanning segment. Residue R189 is a topological domain, extracellular. Residues 190–210 (VVSISLNTPIIQMFLYICGKA) form a helical membrane-spanning segment. Over 211-240 (WAKTIPCWTITIRGRKYGINIDKPWTQKEQ) the chain is Cytoplasmic. A helical membrane pass occupies residues 241 to 261 (MFSTLLYAICQGAFYTHYNIL). Residues 262–272 (TQKLFYHSAFS) lie on the Extracellular side of the membrane. A helical transmembrane segment spans residues 273-293 (FGYQFLLSLSVQFIGFGFAGI). Residues 294-334 (LRKFVVYPARALWPTVMPTIAINKALLGKEKHESGMSRYKF) lie on the Cytoplasmic side of the membrane. Residues 335 to 355 (FFLTFFIMFIYNWFPTYIINI) traverse the membrane as a helical segment. At 356 to 374 (LNTFNWMTWIKPSNINLAN) the chain is on the extracellular side. N374 is a glycosylation site (N-linked (GlcNAc...) asparagine). A helical transmembrane segment spans residues 375 to 395 (ITGGVTGLGINPISSFDWNVI). Topologically, residues 396 to 404 (SFNSPLVYP) are cytoplasmic. Residues 405–425 (FWSYLTQYLGCILAALIVIAV) traverse the membrane as a helical segment. The Extracellular segment spans residues 426–480 (YYSNYMSCQYLPIFTNSLYTNTGHSFKVTEVLDSDNKLDVKKYQSYSPPYYSAGN). The chain crosses the membrane as a helical span at residues 481–501 (LVSYGAFICAYPLMITWSFIV). The Cytoplasmic segment spans residues 502-553 (HSKLLFNAFKDWALNLWAMRKLKSWVTMFKSDYRALDDYDDPHSNAMKNYKE). The helical transmembrane segment at 554–574 (VPDWWYFAILIGSLVVGIAVV) threads the bilayer. Residues 575–582 (EHYPTNTP) lie on the Extracellular side of the membrane. A helical membrane pass occupies residues 583 to 603 (VWGLFVCLGFNFVFLIPTTIL). The Cytoplasmic segment spans residues 604 to 614 (QATTGYSFGLN). A helical transmembrane segment spans residues 615–635 (LLIEMVMGYALPGNPIAIMIL). Over 636-671 (KAFGYNIDGQADNYVSNLKIAHYCKIPPMALFRGQC) the chain is Extracellular. The chain crosses the membrane as a helical span at residues 672–692 (VIVFIQIFVNLGVLNWQISNI). Residues 693–730 (KDFCTPHQNAKFTCPDAVTYYNASVVWGAIGPKRIFNY) are Cytoplasmic-facing. Residues 731–751 (IYPIFKWCWLIGACIGIFFGV) traverse the membrane as a helical segment. The Extracellular portion of the chain corresponds to 752–766 (WKRWGKFYPRYFDPM). A helical membrane pass occupies residues 767-789 (LFVGGMLNMSPPYNLMYYTSGMI). Residues 790-811 (VSYISQYYMKRHHLNLWEKYNY) lie on the Cytoplasmic side of the membrane. Residues 812 to 832 (VLSAGFSTGLVLSAIIIFFAV) traverse the membrane as a helical segment. Topologically, residues 833-877 (QYKDTAFNWWGNTVPYAGADGVGYPLKNITDTANGYFGYAPGHYP) are extracellular. N860 carries N-linked (GlcNAc...) asparagine glycosylation.

This sequence belongs to the oligopeptide OPT transporter family.

It is found in the membrane. In terms of biological role, transports tetra- and pentapeptides. Does not transport glutathione. The chain is Oligopeptide transporter 2 (OPT2) from Saccharomyces cerevisiae (strain ATCC 204508 / S288c) (Baker's yeast).